The following is a 649-amino-acid chain: Transcription factor tau 95 kDa subunit (649 aa).

The disordered stretch occupies residues 1 to 21 (MPVEEPLATLSSIPDSSADQA). The segment covering 9-19 (TLSSIPDSSAD) has biased composition (polar residues). Copy 1 of the repeat occupies 221-239 (PSTDFQLPPPPKLSMVGFP). A 2 X repeats, Pro-rich region spans residues 221–419 (PSTDFQLPPP…PPLVFESDTP (199 aa)). A Nuclear localization signal motif is present at residues 296–300 (AKKTK). The stretch at 400–419 (PIVKKNVPKPPPLVFESDTP) is repeat 2. Residues 556–612 (IAAGDDFDDNGAITEEPDDAALENEEMDTDQNLKVPASIDDDVDDVDADEEEQESFD) form a disordered region. Composition is skewed to acidic residues over residues 560 to 584 (DDFD…EMDT) and 594 to 610 (IDDD…EQES). The residue at position 617 (S617) is a Phosphoserine.

The protein belongs to the TFIIIC subunit 5 family. As to quaternary structure, component of the TFIIIC complex composed of TFC1, TFC3, TFC4, TFC6, TFC7 and TFC8. The subunits are organized in two globular domains, tauA and tauB, connected by a proteolysis-sensitive and flexible linker. Interacts with TFC3, TFC4 and TFC6.

The protein resides in the nucleus. Its function is as follows. TFIIIC mediates tRNA and 5S RNA gene activation by binding to intragenic promoter elements. Upstream of the transcription start site, TFIIIC assembles the initiation complex TFIIIB-TFIIIC-tDNA, which is sufficient for RNA polymerase III recruitment and function. Part of the tauA domain of TFIIIC that binds boxA DNA promoter sites of tRNA and similar genes. Participates in the interconnection of tauA with tauB via its contacts with TFC3 and TFC6. Serves as a scaffold critical for tauA-DNA spatial configuration and tauB-DNA stability. The protein is Transcription factor tau 95 kDa subunit (TFC1) of Saccharomyces cerevisiae (strain ATCC 204508 / S288c) (Baker's yeast).